Here is a 480-residue protein sequence, read N- to C-terminus: Zinc finger protein ztf-6 (480 aa).

Disordered regions lie at residues C92–V160, G174–D198, L282–S307, and D328–P351. Low complexity-rich tracts occupy residues S95 to H105, S131 to V145, G174 to S187, and S286 to S296. 2 C2H2-type zinc fingers span residues Y359–H383 and F388–H410. The segment at Y416–C441 adopts a C2H2-type 3; degenerate zinc-finger fold. Positions A461–P480 are disordered.

Its function is as follows. Probable transcription factor, involved in regulation of dopamine neuron lineage specification. May play a role in maintaining robustness of the Wnt/beta-catenin asymmetry pathway. The chain is Zinc finger protein ztf-6 from Caenorhabditis elegans.